The chain runs to 426 residues: Gamma-glutamyl phosphate reductase (426 aa).

It belongs to the gamma-glutamyl phosphate reductase family.

It is found in the cytoplasm. The catalysed reaction is L-glutamate 5-semialdehyde + phosphate + NADP(+) = L-glutamyl 5-phosphate + NADPH + H(+). It participates in amino-acid biosynthesis; L-proline biosynthesis; L-glutamate 5-semialdehyde from L-glutamate: step 2/2. Functionally, catalyzes the NADPH-dependent reduction of L-glutamate 5-phosphate into L-glutamate 5-semialdehyde and phosphate. The product spontaneously undergoes cyclization to form 1-pyrroline-5-carboxylate. In Cupriavidus taiwanensis (strain DSM 17343 / BCRC 17206 / CCUG 44338 / CIP 107171 / LMG 19424 / R1) (Ralstonia taiwanensis (strain LMG 19424)), this protein is Gamma-glutamyl phosphate reductase.